The chain runs to 316 residues: tRNA dimethylallyltransferase (316 aa).

17 to 24 (GPTASGKT) contributes to the ATP binding site. Residue 19 to 24 (TASGKT) participates in substrate binding. 4 interaction with substrate tRNA regions span residues 42 to 45 (DSAL), 166 to 170 (QRLSR), 247 to 252 (RCVGYR), and 280 to 287 (KRQITWLR).

The protein belongs to the IPP transferase family. In terms of assembly, monomer. Mg(2+) is required as a cofactor.

It carries out the reaction adenosine(37) in tRNA + dimethylallyl diphosphate = N(6)-dimethylallyladenosine(37) in tRNA + diphosphate. In terms of biological role, catalyzes the transfer of a dimethylallyl group onto the adenine at position 37 in tRNAs that read codons beginning with uridine, leading to the formation of N6-(dimethylallyl)adenosine (i(6)A). This is tRNA dimethylallyltransferase from Escherichia coli O81 (strain ED1a).